The primary structure comprises 398 residues: MAENFSWLHRGIAEVFPQPTDAESDIESLEKRLATTDRPLRVKYGIDPTGADIHLGHSIPMRKLRGFQDAGHTAVLIIGDFTARIGDPTGKSEMRRQLTEEDVKQNAQTYLDQVRPILDFDTPGRLEVRYNSEWLSRLDLGKITELLATMTVGQMLAKEGFADRYKKENPIFLHEFLYPLMQGYDSVAIEADVELGGTDQKFNIAVGRDLQRHFGQKPQFGVLLPILIGTDGVQKMSKSLGNYVSLSEHPGQKYQKLQGVPDQMLEQYFELLTDLPIDKLPANPRDRQMLLAWEIVKQYHGEQAAQEAKEAAQSGGKEGAVPEFSLAGVPQFPVKLAYLLGATGLCKSTGEGKRKIQEGGVRLDGDRISDADTIFQQPDELQGRVLQVGKNKFVRLVL.

Positions 48–57 (PTGADIHLGH) match the 'HIGH' region motif. The short motif at 235-239 (KMSKS) is the 'KMSKS' region element. ATP is bound at residue K238. The 65-residue stretch at 334–398 (VKLAYLLGAT…GKNKFVRLVL (65 aa)) folds into the S4 RNA-binding domain.

The protein belongs to the class-I aminoacyl-tRNA synthetase family. TyrS type 2 subfamily. Homodimer.

The protein resides in the cytoplasm. It catalyses the reaction tRNA(Tyr) + L-tyrosine + ATP = L-tyrosyl-tRNA(Tyr) + AMP + diphosphate + H(+). Catalyzes the attachment of tyrosine to tRNA(Tyr) in a two-step reaction: tyrosine is first activated by ATP to form Tyr-AMP and then transferred to the acceptor end of tRNA(Tyr). The sequence is that of Tyrosine--tRNA ligase from Trichormus variabilis (strain ATCC 29413 / PCC 7937) (Anabaena variabilis).